The primary structure comprises 1119 residues: Transient receptor potential cation channel subfamily A member 1 (1119 aa).

Residues 1-718 (MKRSLRKMWR…MKWLAYGFRA (718 aa)) are Cytoplasmic-facing. ANK repeat units follow at residues 62–92 (MDTFFLHYAAAEGQIELMEKITRDSSLEVLH), 97–126 (YGNTPLHCAVEKNQIESVKFLLSRGANPNL), 130–160 (NMMAPLHIAVQGMNNEVMKVLLEHRTIDVNL), 164–193 (NGNTAVIIACTTNNSEALQILLKKGAKPCK), 197–226 (WGCFPIHQAAFSGSKECMEIILRFGEEHGY), 238–267 (GKATPLHLAVQNGDLEMIKMCLDNGAQIDP), 271–301 (GRCTAIHFAATQGATEIVKLMISSYSGSVDI), 308–337 (CHETMLHRASLFDHHELADYLISVGADINK), 341–370 (EGRSPLILATASASWNIVNLLLSKGAQVDI), 374–403 (FGRNFLHLTVQQPYGLKNLRPEFMQMQQIK), 412–441 (DGCTPLHYACRQGGPGSVNNLLGFNVSIHS), 445–474 (DKKSPLHFAASYGRINTCQRLLQDISDTRL), 481–510 (HGMTPLHLAAKNGHDKVVQLLLKKGALFLS), 513–542 (NGWTALHHASMGGYTQTMKVILDTNLKCTD), 547–576 (DGNTALHFAAREGHAKAVALLLSHNADIVL), and 579–609 (QQASFLHLALHNKRKEVVLTIIRSKRWDECL). Cystine bridges form between C192-C665, C462-C665, C608-C621, C621-C665, and C633-C856. At P394 the chain carries 4-hydroxyproline; by EGLN1; transient; in normoxia and hyperoxia. 2 residues coordinate (E)-cinnamaldehyde: C414 and C421. Position 621 (C621) interacts with (E)-cinnamaldehyde. Residue C633 is modified to Cysteine sulfenic acid (-SOH); transient; in hyperoxia. Residues C641, C665, and K710 each contribute to the (E)-cinnamaldehyde site. Residues 719–739 (HMMNLGSYCLGLIPMTILVVN) form a helical membrane-spanning segment. At 740-767 (IKPGMAFNSTGIINETSDHSEILDTTNS) the chain is on the extracellular side. Residues N747 and N753 are each glycosylated (N-linked (GlcNAc...) asparagine). Residues 768 to 793 (YLIKTCMILVFLSSIFGYCKEAGQIF) form a helical membrane-spanning segment. The Ca(2+) site is built by E788 and Q791. The Cytoplasmic segment spans residues 794-798 (QQKRN). A helical transmembrane segment spans residues 799 to 823 (YFMDISNVLEWIIYTTGIIFVLPLF). Positions 805 and 808 each coordinate Ca(2+). The Extracellular portion of the chain corresponds to 824–829 (VEIPAH). Residues 830–850 (LQWQCGAIAVYFYWMNFLLYL) traverse the membrane as a helical segment. Over 851 to 862 (QRFENCGIFIVM) the chain is Cytoplasmic. The residue at position 856 (C856) is a Cysteine sulfenic acid (-SOH); transient; in hyperoxia. The helical transmembrane segment at 863 to 892 (LEVILKTLLRSTVVFIFLLLAFGLSFYILL) threads the bilayer. The Extracellular segment spans residues 893–901 (NLQDPFSSP). Residues 902–922 (LLSIIQTFSMMLGDINYRESF) constitute an intramembrane region (pore-forming). The Extracellular portion of the chain corresponds to 923-933 (LEPYLRNELAH). A helical membrane pass occupies residues 934–960 (PVLSFAQLVSFTIFVPIVLMNLLIGLA). At 961 to 1119 (VGDIAEVQKH…VKAKTHHLEP (159 aa)) the chain is on the cytoplasmic side. Residues 1042–1071 (MEILKQKYRLKDLTFLLEKQHELIKLIIQK) are a coiled coil. Position 1046 to 1052 (1046 to 1052 (KQKYRLK)) interacts with a 1,2-diacyl-sn-glycero-3-phospho-(1D-myo-inositol).

It belongs to the transient receptor (TC 1.A.4) family. As to quaternary structure, homotetramer. Interacts with TMEM100. Interacts with EGLN1. Interacts with the scorpion wasabi receptor toxin at the same site that electrophiles but in a non-covalent manner. TRPA1 activation by electrophiles occurs though covalent modification of specific cysteine residues in the N-terminal cytoplasmic domain. Post-translationally, hydroxylation is required for TRPA1 activity inhibition in normoxia. In hypoxia, the decrease in oxygen concentration diminishes the activity of the hydroxylase EGLN1, thus relieving TRPA1 from inhibition and ultimately leading to channel activation. In terms of processing, oxidation of Cys-633 and Cys-856 in hyperoxia may override the hydroxylase EGLN1-mediated inhibition, causing TRPA1 activation.

The protein resides in the cell membrane. It catalyses the reaction Ca(2+)(in) = Ca(2+)(out). The enzyme catalyses Mg(2+)(in) = Mg(2+)(out). It carries out the reaction Na(+)(in) = Na(+)(out). The catalysed reaction is K(+)(in) = K(+)(out). It catalyses the reaction Zn(2+)(in) = Zn(2+)(out). Electrophilic ligands activate the channel by covalent modification of intracellular cysteines; Cys-621 plays a key role in covalent binding of electrophiles. Extracellular Ca(2+) both potentiates and inactivates TRPA1; a rapid potentiation follows by slow desensitization. Activated by increase in intracellular Ca(2+) concentration. Inhibited by the potent blocker of TRPV channels ruthenium red, A-967079, AP-18, HC-030031, and aryl sulfonamide derivative (S)-N-(4-chlorobenzyl)-1-((4-fluorophenyl)sulfonyl)pyrrolidine-2-carboxamide (ASD). Activated by benzyl isothiocyanate (BITC), iodoacetamide, sulfhydryl reactive agent MTSEA, N-methyl maleimide (NMM), N-ethylmaleimide (NEM), and 2-aminoethyldiphenylborinate (2-APB). Also activated by hyperoxia. Acivated by intracellular Zn(2+). TRPA1 activation may critically depend on the presence of small intracellular compounds such as polyphosphates. Functionally, ligand-activated Ca(2+)-permeable, nonselective cation channel involved in pain detection and possibly also in cold perception, oxygen concentration perception, cough, itch, and inner ear function. Has a relatively high Ca(2+) selectivity, with a preference for divalent over monovalent cations (Ca(2+) &gt; Ba(2+) &gt; Mg(2+) &gt; NH4(+) &gt; Li(+) &gt; K(+)), the influx of cation into the cytoplasm leads to membrane depolarization. Has a central role in the pain response to endogenous inflammatory mediators, such as bradykinin and to a diverse array of irritants. Activated by a large variety of structurally unrelated electrophilic and non-electrophilic chemical compounds, such as allylthiocyanate (AITC) from mustard oil or wasabi, cinnamaldehyde, diallyl disulfide (DADS) from garlic, and acrolein, an environmental irritant. Electrophilic ligands activate TRPA1 by interacting with critical N-terminal Cys residues in a covalent manner. Non-electrophile agonists bind at distinct sites in the transmembrane domain to promote channel activation. Also acts as an ionotropic cannabinoid receptor by being activated by delta(9)-tetrahydrocannabinol (THC), the psychoactive component of marijuana. May be a component for the mechanosensitive transduction channel of hair cells in inner ear, thereby participating in the perception of sounds. The protein is Transient receptor potential cation channel subfamily A member 1 of Homo sapiens (Human).